The following is a 417-amino-acid chain: MAAPAVKSASTPKKATAQFLWEAKTKSGESKKGEMEAMDVEAVNARLKSLGLNPVKVRKKSMLDGDITIPGFGGVEGKDILVFTRQFATMIDAGLPLVQCLDILASQMDNPSFKKVLFAIKSKVEQGSTFADALKEHPKVFDELYVQLCAAGEVGGILDAILNRLAAYREKNEKLKSKVKSAMTYPIIVILVAIGVTAVLLLKVTPVFEKMFADFGSELPGPTQMIVNFSHMAQEYFFHVAGSIVAVVMSFTWSYRQPRGRKFWDKVFLFMPVFGPVLRKVAVARFTRTLGTMISSGVPILDALDVTAKTAGNRTVEDAIIYVRGKIAEGKNIAGPLAETKVFPSMVVQMIGVGEATGAMDTMLNKIADFYDDEVDAAINSLTAMIEPVLMVFLGGVVGGFLIGMYLPIFSLAGAIQ.

4 consecutive transmembrane segments (helical) span residues Phe141–Ile161, Ala182–Leu202, Glu235–Tyr255, and Leu390–Phe410.

Belongs to the GSP F family. Homotetramer. Interacts with PilB.

The protein localises to the cell inner membrane. Its function is as follows. Essential inner membrane component of the type IV pilus (T4P) that plays a role in surface and host cell adhesion, colonization, biofilm maturation, virulence, and twitching, a form of surface-associated motility facilitated by cycles of extension, adhesion, and retraction of T4P fibers. Controls both pilus assembly and disassembly and plays an important role in PilB localization to the complex and ATPase activity. The chain is Type IV pilus assembly protein PilC (pilC) from Myxococcus xanthus (strain DK1622).